Here is a 134-residue protein sequence, read N- to C-terminus: uncharacterized protein (134 aa).

Residues 10-70 enclose the HTH tetR-type domain; the sequence is KETRQRIIDA…AVLASRQHPL (61 aa). The H-T-H motif DNA-binding region spans 33 to 52; sequence TLDQIARKAGVTRGAVYWHF.

Functionally, unknown, does not seem to be involved in regulation of the ttgGHI or ttgVW operons. This is an uncharacterized protein from Pseudomonas putida (strain DOT-T1E).